Consider the following 299-residue polypeptide: ATP phosphoribosyltransferase (299 aa).

It belongs to the ATP phosphoribosyltransferase family. Long subfamily. It depends on Mg(2+) as a cofactor.

It localises to the cytoplasm. The enzyme catalyses 1-(5-phospho-beta-D-ribosyl)-ATP + diphosphate = 5-phospho-alpha-D-ribose 1-diphosphate + ATP. It participates in amino-acid biosynthesis; L-histidine biosynthesis; L-histidine from 5-phospho-alpha-D-ribose 1-diphosphate: step 1/9. Feedback inhibited by histidine. Catalyzes the condensation of ATP and 5-phosphoribose 1-diphosphate to form N'-(5'-phosphoribosyl)-ATP (PR-ATP). Has a crucial role in the pathway because the rate of histidine biosynthesis seems to be controlled primarily by regulation of HisG enzymatic activity. This Shewanella piezotolerans (strain WP3 / JCM 13877) protein is ATP phosphoribosyltransferase.